The following is a 234-amino-acid chain: Biosynthetic peptidoglycan transglycosylase (234 aa).

The chain crosses the membrane as a helical span at residues 11-31 (RFLLFAMLGFVGLSVLLVLVF).

It belongs to the glycosyltransferase 51 family.

The protein resides in the cell inner membrane. The enzyme catalyses [GlcNAc-(1-&gt;4)-Mur2Ac(oyl-L-Ala-gamma-D-Glu-L-Lys-D-Ala-D-Ala)](n)-di-trans,octa-cis-undecaprenyl diphosphate + beta-D-GlcNAc-(1-&gt;4)-Mur2Ac(oyl-L-Ala-gamma-D-Glu-L-Lys-D-Ala-D-Ala)-di-trans,octa-cis-undecaprenyl diphosphate = [GlcNAc-(1-&gt;4)-Mur2Ac(oyl-L-Ala-gamma-D-Glu-L-Lys-D-Ala-D-Ala)](n+1)-di-trans,octa-cis-undecaprenyl diphosphate + di-trans,octa-cis-undecaprenyl diphosphate + H(+). It functions in the pathway cell wall biogenesis; peptidoglycan biosynthesis. Functionally, peptidoglycan polymerase that catalyzes glycan chain elongation from lipid-linked precursors. This Chromohalobacter salexigens (strain ATCC BAA-138 / DSM 3043 / CIP 106854 / NCIMB 13768 / 1H11) protein is Biosynthetic peptidoglycan transglycosylase.